Here is a 307-residue protein sequence, read N- to C-terminus: Pollen allergen KBG 60 (307 aa).

The N-terminal stretch at Met-1 to Ser-22 is a signal peptide.

It belongs to the Poa p IX/Phl p VI allergen family. In terms of tissue distribution, pollen.

This is Pollen allergen KBG 60 from Poa pratensis (Kentucky bluegrass).